Here is a 61-residue protein sequence, read N- to C-terminus: Potassium channel toxin alpha-KTx 6.9 (61 aa).

A signal peptide spans 1 to 23; that stretch reads MNAKFILLLLVVTTTTLLPDAKG. 4 disulfide bridges follow: Cys-29–Cys-50, Cys-35–Cys-55, Cys-39–Cys-57, and Cys-45–Cys-60.

This sequence belongs to the short scorpion toxin superfamily. Potassium channel inhibitor family. Alpha-KTx 06 subfamily. As to expression, expressed by the venom gland.

The protein localises to the secreted. Functionally, inhibits Kv1.2/KCNA2 and Kv1.3/KCNA3 voltage-gated potassium channels. In Opistophthalmus carinatus (African yellow leg scorpion), this protein is Potassium channel toxin alpha-KTx 6.9.